The sequence spans 332 residues: Ferredoxin--NADP reductase (332 aa).

7 residues coordinate FAD: D33, Q41, Y46, A86, M121, D282, and S325.

Belongs to the ferredoxin--NADP reductase type 2 family. In terms of assembly, homodimer. FAD serves as cofactor.

The catalysed reaction is 2 reduced [2Fe-2S]-[ferredoxin] + NADP(+) + H(+) = 2 oxidized [2Fe-2S]-[ferredoxin] + NADPH. The chain is Ferredoxin--NADP reductase from Sulfurisphaera tokodaii (strain DSM 16993 / JCM 10545 / NBRC 100140 / 7) (Sulfolobus tokodaii).